The sequence spans 51 residues: Sperm protamine P1 (51 aa).

Belongs to the protamine P1 family. As to quaternary structure, cross-linked by interchain disulfide bonds around the DNA-helix. As to expression, testis.

Its subcellular location is the nucleus. It is found in the chromosome. Functionally, protamines substitute for histones in the chromatin of sperm during the haploid phase of spermatogenesis. They compact sperm DNA into a highly condensed, stable and inactive complex. The polypeptide is Sperm protamine P1 (PRM1) (Pongo pygmaeus (Bornean orangutan)).